Here is a 363-residue protein sequence, read N- to C-terminus: 3-isopropylmalate dehydrogenase (363 aa).

77–90 (GPKWQHLPPDQQPE) serves as a coordination point for NAD(+). Substrate-binding residues include arginine 98, arginine 108, arginine 137, and aspartate 226. Residues aspartate 226, aspartate 250, and aspartate 254 each coordinate Mg(2+). 284–296 (GSAPDIAGKNIAN) serves as a coordination point for NAD(+).

Belongs to the isocitrate and isopropylmalate dehydrogenases family. LeuB type 1 subfamily. In terms of assembly, homodimer. Requires Mg(2+) as cofactor. The cofactor is Mn(2+).

Its subcellular location is the cytoplasm. It carries out the reaction (2R,3S)-3-isopropylmalate + NAD(+) = 4-methyl-2-oxopentanoate + CO2 + NADH. It participates in amino-acid biosynthesis; L-leucine biosynthesis; L-leucine from 3-methyl-2-oxobutanoate: step 3/4. Functionally, catalyzes the oxidation of 3-carboxy-2-hydroxy-4-methylpentanoate (3-isopropylmalate) to 3-carboxy-4-methyl-2-oxopentanoate. The product decarboxylates to 4-methyl-2 oxopentanoate. This chain is 3-isopropylmalate dehydrogenase, found in Buchnera aphidicola subsp. Pemphigus spyrothecae.